Reading from the N-terminus, the 100-residue chain is NADH-quinone oxidoreductase subunit K (100 aa).

Helical transmembrane passes span 4–24 (LQHGLILAAILFVLGLTGLLV), 28–48 (LLFMLISLEVMINAAALAFIV), and 60–80 (VMYILAISLAAAEASIGLALL).

Belongs to the complex I subunit 4L family. NDH-1 is composed of 13 different subunits. Subunits NuoA, H, J, K, L, M, N constitute the membrane sector of the complex.

It is found in the cell inner membrane. The catalysed reaction is a quinone + NADH + 5 H(+)(in) = a quinol + NAD(+) + 4 H(+)(out). NDH-1 shuttles electrons from NADH, via FMN and iron-sulfur (Fe-S) centers, to quinones in the respiratory chain. The immediate electron acceptor for the enzyme in this species is believed to be ubiquinone. Couples the redox reaction to proton translocation (for every two electrons transferred, four hydrogen ions are translocated across the cytoplasmic membrane), and thus conserves the redox energy in a proton gradient. This chain is NADH-quinone oxidoreductase subunit K, found in Serratia proteamaculans (strain 568).